An 892-amino-acid chain; its full sequence is Dystroglycan 1 (892 aa).

The signal sequence occupies residues 1–27 (MRMSAGLSLLLPLWGRTFLLLLSVAMA). Topologically, residues 28–750 (QSHWPSEAGR…SSEDDVYLHT (723 aa)) are extracellular. Positions 30–405 (HWPSEAGRDW…GQIRPTMTIP (376 aa)) are required for laminin recognition. The tract at residues 46–68 (SMHSVLSDLHEAVPTVVGIPDGI) is O-glycosylated at one site. N-linked (GlcNAc...) asparagine glycosylation occurs at Asn138. A disulfide bridge connects residues Cys179 and Cys261. Positions 313 to 482 (ATPTPVTAIG…PPTRIRTTTS (170 aa)) are mucin-like domain. Residues Thr314, Thr316, and Thr376 are each glycosylated (O-linked (Man6P...) threonine). The segment at 378 to 497 (TLGPIQPTRV…GEPNQRPELK (120 aa)) is disordered. The span at 410–444 (PTAVATPPTTTTKKPRVSTPKPATPSTDSSTTTTR) shows a compositional bias: low complexity. The O-glycosylated at seven sites with GalNAc stretch occupies residues 460 to 482 (TTKAPITRLETASPPTRIRTTTS). A Peptidase S72 domain is found at 600–709 (RAPARFKAKF…SSIAVTGSGS (110 aa)). Asn638, Asn646, and Asn658 each carry an N-linked (GlcNAc...) asparagine glycan. An intrachain disulfide couples Cys666 to Cys710. The interval 721–742 (PRRVPSEVPSTDVPDRDPEKSS) is disordered. Residues 733–742 (VPDRDPEKSS) show a composition bias toward basic and acidic residues. The helical transmembrane segment at 751-771 (VIPAVVVAAILLIAGIIAMIC) threads the bilayer. Residues 772 to 892 (YRKKRKGKLT…YRSPPPYVPP (121 aa)) are Cytoplasmic-facing. The Nuclear localization signal signature appears at 773-779 (RKKRKGK). A Phosphothreonine modification is found at Thr787. A required for interaction with CAV3 region spans residues 816 to 892 (LQEEKAPLPP…YRSPPPYVPP (77 aa)). Residues 820 to 892 (KAPLPPPEYP…YRSPPPYVPP (73 aa)) form a disordered region. Polar residues predominate over residues 829-843 (PNQSVPETTPLNQDT). A compositionally biased stretch (pro residues) spans 856 to 867 (NAPPYQPPPPFT). The segment at 877–892 (PKNMTPYRSPPPYVPP) is required for binding DMD and UTRN. Residues 886-889 (PPPY) carry the PPXY motif motif. Tyr889 is modified (phosphotyrosine; by SRC).

Monomer. Heterodimer of alpha- and beta-dystroglycan subunits which are the central components of the dystrophin-glycoprotein complex. This complex then can form a dystrophin-associated glycoprotein complex (DGC) which is composed of three subcomplexes: a cytoplasmic complex comprised of DMD (or UTRN), DTNA and a number of syntrophins, such as SNTB1, SNTB2, SNTG1 and SNTG2, the transmembrane dystroglycan complex, and the sarcoglycan-sarcospan complex. Interacts (via the N-terminal of alphaDAG1) with LARGE1; the interaction enhances laminin binding. Interacts with SGCD. Interacts with AGR2 and AGR3. Interacts (betaDAG1) with DMD; the interaction is inhibited by phosphorylation on the PPXY motif. Interacts (betaDAG1, via its PPXY motif) with UTRN (via its WWW and ZZ domains); the interaction is inhibited by phosphorylation on the PPXY motif. Interacts (betaDAG1, via its phosphorylated PPXY motif) with the SH2 domain-containing proteins, FYN, CSK, NCK and SHC. Interacts (betaDAG1) with CAV3 (via a central WW-like domain); the interaction disrupts the binding of DMD. BetaDAG1 directly interacts with ANK3, but not with ANK2; this interaction does not interfere with DMD-binding and is required for retention at costameres. Identified in a dystroglycan complex that contains at least PRX, DRP2, UTRN, DMD and DAG1. Interacts with POMGNT1. BetaDAG1 interacts with CD93. Post-translationally, O-glycosylated. POMGNT1 catalyzes the initial addition of N-acetylglucosamine, giving rise to the GlcNAc(beta1-2)Man(alpha1-)O-Ser/Thr moiety and thus providing the necessary basis for the addition of further carbohydrate moieties. Heavily O-glycosylated comprising of up to two thirds of its mass and the carbohydrate composition differs depending on tissue type. Mucin-type O-glycosylation is important for ligand binding activity. O-mannosylation is found in high abundance in both brain and muscle where the most abundant glycan is Sia-alpha-2-3-Gal-beta-1-4-Glc-NAc-beta-1-2-Man. In muscle, glycosylation on Thr-314, Thr-316 and Thr-376 by a phosphorylated O-mannosyl glycan with the structure 2-(N-acetylamido)-2-deoxygalactosyl-beta-1,3-2-(N-acetylamido)-2-deoxyglucosyl-beta-1,4-6-phosphomannose is mediated by like-acetylglucosaminyltransferase (LARGE1) protein amd is required for laminin binding. O-glycosylated in the N-terminal region with a core 1 or possibly core 8 glycan. The brain form displays a unique glycosylation pattern which is absent in other tissues; this form shows enhanced binding to laminin LAMA5 compared to the skeletal muscle form. In terms of processing, N-glycosylated. Autolytic cleavage produces the alpha and beta subunits. In cutaneous cells, as well as in certain pathological conditions, shedding of beta-dystroglycan can occur releasing a peptide of about 30 kDa. Post-translationally, SRC-mediated phosphorylation of the PPXY motif of the beta subunit recruits SH2 domain-containing proteins, but inhibits binding to WWW domain-containing proteins, DMD and UTRN. This phosphorylation also inhibits nuclear entry.

Its subcellular location is the secreted. It localises to the extracellular space. The protein localises to the cell membrane. It is found in the cytoplasm. The protein resides in the cytoskeleton. Its subcellular location is the nucleus. It localises to the nucleoplasm. The protein localises to the sarcolemma. It is found in the postsynaptic cell membrane. Functionally, the dystroglycan complex is involved in a number of processes including laminin and basement membrane assembly, sarcolemmal stability, cell survival, peripheral nerve myelination, nodal structure, cell migration, and epithelial polarization. Extracellular peripheral glycoprotein that acts as a receptor for extracellular matrix proteins containing laminin-G domains. Receptor for laminin-2 (LAMA2) and agrin in peripheral nerve Schwann cells. Also acts as a receptor for laminin LAMA5. In terms of biological role, transmembrane protein that plays important roles in connecting the extracellular matrix to the cytoskeleton. Acts as a cell adhesion receptor in both muscle and non-muscle tissues. Receptor for both DMD and UTRN and, through these interactions, scaffolds axin to the cytoskeleton. Also functions in cell adhesion-mediated signaling and implicated in cell polarity. The sequence is that of Dystroglycan 1 from Canis lupus familiaris (Dog).